Reading from the N-terminus, the 61-residue chain is Photosystem II reaction center protein K (61 aa).

Residues 1 to 24 (MLNILSFIGICLNSFLYSSSFFVA) constitute a propeptide that is removed on maturation. The chain crosses the membrane as a helical span at residues 40–60 (MPVIPLFFFLLAFVWQAAVSF).

This sequence belongs to the PsbK family. PSII is composed of 1 copy each of membrane proteins PsbA, PsbB, PsbC, PsbD, PsbE, PsbF, PsbH, PsbI, PsbJ, PsbK, PsbL, PsbM, PsbT, PsbX, PsbY, PsbZ, Psb30/Ycf12, at least 3 peripheral proteins of the oxygen-evolving complex and a large number of cofactors. It forms dimeric complexes.

The protein resides in the plastid. The protein localises to the chloroplast thylakoid membrane. One of the components of the core complex of photosystem II (PSII). PSII is a light-driven water:plastoquinone oxidoreductase that uses light energy to abstract electrons from H(2)O, generating O(2) and a proton gradient subsequently used for ATP formation. It consists of a core antenna complex that captures photons, and an electron transfer chain that converts photonic excitation into a charge separation. This chain is Photosystem II reaction center protein K, found in Cucumis sativus (Cucumber).